Consider the following 198-residue polypeptide: Transcriptional regulator GfcR (198 aa).

It belongs to the purine/pyrimidine phosphoribosyltransferase family. GfcR subfamily.

The protein is Transcriptional regulator GfcR of Methanocorpusculum labreanum (strain ATCC 43576 / DSM 4855 / Z).